A 130-amino-acid polypeptide reads, in one-letter code: MSKQAQSRSRKKARKNIPAGLAHIKSTFNNTIVTITDLSGNVIGWSSSGAVGFKGSRKSTPYAAQMAADAAARSAQEHGVKKVDVFVKGPGSGRETAIRSLQTAGLEIGSISDTTPLAFNGCRPPKKRLV.

The protein belongs to the universal ribosomal protein uS11 family. In terms of assembly, part of the 30S ribosomal subunit. Interacts with proteins S7 and S18. Binds to IF-3.

In terms of biological role, located on the platform of the 30S subunit, it bridges several disparate RNA helices of the 16S rRNA. Forms part of the Shine-Dalgarno cleft in the 70S ribosome. The sequence is that of Small ribosomal subunit protein uS11 from Tropheryma whipplei (strain TW08/27) (Whipple's bacillus).